The following is a 520-amino-acid chain: 4-hydroxyphenylacetate 3-monooxygenase oxygenase component (520 aa).

Belongs to the FADH(2)-utilizing monooxygenase family. 4-HPA 3-monooxygenase consists of a reductase component HpaC and an oxygenase component HpaB.

The catalysed reaction is 4-hydroxyphenylacetate + FADH2 + O2 = 3,4-dihydroxyphenylacetate + FAD + H2O + H(+). It functions in the pathway aromatic compound metabolism; 4-hydroxyphenylacetate degradation; pyruvate and succinate semialdehyde from 4-hydroxyphenylacetate: step 1/7. In terms of biological role, utilizes FADH(2) supplied by HpaC or by another flavin reductase, to catalyze the hydroxylation of 4-hydroxyphenylacetic acid, leading to the production of 3,4-DHPA. In Klebsiella oxytoca, this protein is 4-hydroxyphenylacetate 3-monooxygenase oxygenase component (hpaB).